The chain runs to 483 residues: Aspartyl/glutamyl-tRNA(Asn/Gln) amidotransferase subunit B (483 aa).

It belongs to the GatB/GatE family. GatB subfamily. In terms of assembly, heterotrimer of A, B and C subunits.

The enzyme catalyses L-glutamyl-tRNA(Gln) + L-glutamine + ATP + H2O = L-glutaminyl-tRNA(Gln) + L-glutamate + ADP + phosphate + H(+). It carries out the reaction L-aspartyl-tRNA(Asn) + L-glutamine + ATP + H2O = L-asparaginyl-tRNA(Asn) + L-glutamate + ADP + phosphate + 2 H(+). Allows the formation of correctly charged Asn-tRNA(Asn) or Gln-tRNA(Gln) through the transamidation of misacylated Asp-tRNA(Asn) or Glu-tRNA(Gln) in organisms which lack either or both of asparaginyl-tRNA or glutaminyl-tRNA synthetases. The reaction takes place in the presence of glutamine and ATP through an activated phospho-Asp-tRNA(Asn) or phospho-Glu-tRNA(Gln). The polypeptide is Aspartyl/glutamyl-tRNA(Asn/Gln) amidotransferase subunit B (Rickettsia rickettsii (strain Sheila Smith)).